A 456-amino-acid polypeptide reads, in one-letter code: O-phospho-L-seryl-tRNA:Cys-tRNA synthase 2 (456 aa).

Pyridoxal 5'-phosphate contacts are provided by residues 146 to 147, Asn251, and 274 to 276; these read AR and SGH. At Lys277 the chain carries N6-(pyridoxal phosphate)lysine.

This sequence belongs to the SepCysS family. In terms of assembly, homodimer. Interacts with SepRS. Pyridoxal 5'-phosphate is required as a cofactor.

It carries out the reaction O-phospho-L-seryl-tRNA(Cys) + hydrogen sulfide + H(+) = L-cysteinyl-tRNA(Cys) + phosphate. Converts O-phospho-L-seryl-tRNA(Cys) (Sep-tRNA(Cys)) to L-cysteinyl-tRNA(Cys) (Cys-tRNA(Cys)). This is O-phospho-L-seryl-tRNA:Cys-tRNA synthase 2 from Methanospirillum hungatei JF-1 (strain ATCC 27890 / DSM 864 / NBRC 100397 / JF-1).